The following is a 256-amino-acid chain: Imidazole glycerol phosphate synthase subunit HisF (256 aa).

Residues Asp12 and Asp131 contribute to the active site.

It belongs to the HisA/HisF family. As to quaternary structure, heterodimer of HisH and HisF.

Its subcellular location is the cytoplasm. It carries out the reaction 5-[(5-phospho-1-deoxy-D-ribulos-1-ylimino)methylamino]-1-(5-phospho-beta-D-ribosyl)imidazole-4-carboxamide + L-glutamine = D-erythro-1-(imidazol-4-yl)glycerol 3-phosphate + 5-amino-1-(5-phospho-beta-D-ribosyl)imidazole-4-carboxamide + L-glutamate + H(+). The protein operates within amino-acid biosynthesis; L-histidine biosynthesis; L-histidine from 5-phospho-alpha-D-ribose 1-diphosphate: step 5/9. IGPS catalyzes the conversion of PRFAR and glutamine to IGP, AICAR and glutamate. The HisF subunit catalyzes the cyclization activity that produces IGP and AICAR from PRFAR using the ammonia provided by the HisH subunit. The sequence is that of Imidazole glycerol phosphate synthase subunit HisF from Pseudomonas fluorescens (strain Pf0-1).